Consider the following 754-residue polypeptide: Leucine-rich repeat-containing protein 36 (754 aa).

2 LRR repeats span residues 51 to 72 (NLRSLDLSRNLITSLKGIQYLC) and 73 to 94 (SLQDLNLYYNNIPSLVEVSRLQ). In terms of domain architecture, LRRCT spans 107–146 (NPVVRKDTDYRLFAVYTLQTLEKLDDRTVREGERKAAKLH). Residues 241–255 (REMPSDNHQEDEFRH) are compositionally biased toward basic and acidic residues. The disordered stretch occupies residues 241 to 270 (REMPSDNHQEDEFRHYSPRQSTVRSPEKMT). Residues 600 to 680 (NDMESLKQKL…EKTVAILHES (81 aa)) adopt a coiled-coil conformation. A disordered region spans residues 702–734 (YSGKALLPPEKGHHLGRSSPFGKSTLSSSSPVA). Residues 722 to 732 (FGKSTLSSSSP) show a composition bias toward polar residues.

The chain is Leucine-rich repeat-containing protein 36 (LRRC36) from Homo sapiens (Human).